A 211-amino-acid polypeptide reads, in one-letter code: N-(5'-phosphoribosyl)anthranilate isomerase (211 aa).

It belongs to the TrpF family.

It carries out the reaction N-(5-phospho-beta-D-ribosyl)anthranilate = 1-(2-carboxyphenylamino)-1-deoxy-D-ribulose 5-phosphate. It functions in the pathway amino-acid biosynthesis; L-tryptophan biosynthesis; L-tryptophan from chorismate: step 3/5. The chain is N-(5'-phosphoribosyl)anthranilate isomerase from Pseudomonas paraeruginosa (strain DSM 24068 / PA7) (Pseudomonas aeruginosa (strain PA7)).